The chain runs to 418 residues: Gamma-glutamyl phosphate reductase (418 aa).

This sequence belongs to the gamma-glutamyl phosphate reductase family.

The protein localises to the cytoplasm. The enzyme catalyses L-glutamate 5-semialdehyde + phosphate + NADP(+) = L-glutamyl 5-phosphate + NADPH + H(+). It participates in amino-acid biosynthesis; L-proline biosynthesis; L-glutamate 5-semialdehyde from L-glutamate: step 2/2. In terms of biological role, catalyzes the NADPH-dependent reduction of L-glutamate 5-phosphate into L-glutamate 5-semialdehyde and phosphate. The product spontaneously undergoes cyclization to form 1-pyrroline-5-carboxylate. In Geobacter sulfurreducens (strain ATCC 51573 / DSM 12127 / PCA), this protein is Gamma-glutamyl phosphate reductase.